Consider the following 308-residue polypeptide: Apolipoprotein F (308 aa).

Belongs to the apolipoprotein F family.

It localises to the secreted. Minor apolipoprotein that associates with LDL. Inhibits cholesteryl ester transfer protein (CETP) activity and appears to be an important regulator of cholesterol transport. Also associates to a lesser degree with VLDL, Apo-AI and Apo-AII. The chain is Apolipoprotein F (Apof) from Rattus norvegicus (Rat).